Here is a 316-residue protein sequence, read N- to C-terminus: Pantothenate kinase (316 aa).

Position 95 to 102 (95 to 102 (GSVAVGKS)) interacts with ATP.

The protein belongs to the prokaryotic pantothenate kinase family.

It is found in the cytoplasm. It catalyses the reaction (R)-pantothenate + ATP = (R)-4'-phosphopantothenate + ADP + H(+). It functions in the pathway cofactor biosynthesis; coenzyme A biosynthesis; CoA from (R)-pantothenate: step 1/5. The sequence is that of Pantothenate kinase from Escherichia coli O17:K52:H18 (strain UMN026 / ExPEC).